Here is a 137-residue protein sequence, read N- to C-terminus: Cellular retinoic acid-binding protein 1 (137 aa).

The Nuclear localization signal signature appears at 21-31 (KALGVNTMLRK). An all-trans-retinoate-binding site is contributed by 132–134 (RIY).

It belongs to the calycin superfamily. Fatty-acid binding protein (FABP) family.

The protein localises to the cytoplasm. In terms of biological role, cytosolic CRABPs may regulate the access of retinoic acid to the nuclear retinoic acid receptors. The protein is Cellular retinoic acid-binding protein 1 (crabp1) of Takifugu rubripes (Japanese pufferfish).